We begin with the raw amino-acid sequence, 117 residues long: Large ribosomal subunit protein uL18 (117 aa).

This sequence belongs to the universal ribosomal protein uL18 family. In terms of assembly, part of the 50S ribosomal subunit; part of the 5S rRNA/L5/L18/L25 subcomplex. Contacts the 5S and 23S rRNAs.

Functionally, this is one of the proteins that bind and probably mediate the attachment of the 5S RNA into the large ribosomal subunit, where it forms part of the central protuberance. The sequence is that of Large ribosomal subunit protein uL18 from Buchnera aphidicola subsp. Acyrthosiphon kondoi (Acyrthosiphon kondoi symbiotic bacterium).